Consider the following 219-residue polypeptide: 2-hydroxy-3-keto-5-methylthiopentenyl-1-phosphate phosphatase (219 aa).

It belongs to the HAD-like hydrolase superfamily. MtnX family.

It catalyses the reaction 2-hydroxy-5-methylsulfanyl-3-oxopent-1-enyl phosphate + H2O = 1,2-dihydroxy-5-(methylsulfanyl)pent-1-en-3-one + phosphate. Its pathway is amino-acid biosynthesis; L-methionine biosynthesis via salvage pathway; L-methionine from S-methyl-5-thio-alpha-D-ribose 1-phosphate: step 4/6. Dephosphorylates 2-hydroxy-3-keto-5-methylthiopentenyl-1-phosphate (HK-MTPenyl-1-P) yielding 1,2-dihydroxy-3-keto-5-methylthiopentene (DHK-MTPene). The chain is 2-hydroxy-3-keto-5-methylthiopentenyl-1-phosphate phosphatase from Bacillus cytotoxicus (strain DSM 22905 / CIP 110041 / 391-98 / NVH 391-98).